A 428-amino-acid polypeptide reads, in one-letter code: Tryptophan synthase beta chain (428 aa).

Lys100 is subject to N6-(pyridoxal phosphate)lysine.

It belongs to the TrpB family. Tetramer of two alpha and two beta chains. It depends on pyridoxal 5'-phosphate as a cofactor.

The catalysed reaction is (1S,2R)-1-C-(indol-3-yl)glycerol 3-phosphate + L-serine = D-glyceraldehyde 3-phosphate + L-tryptophan + H2O. It participates in amino-acid biosynthesis; L-tryptophan biosynthesis; L-tryptophan from chorismate: step 5/5. In terms of biological role, the beta subunit is responsible for the synthesis of L-tryptophan from indole and L-serine. The chain is Tryptophan synthase beta chain from Streptomyces avermitilis (strain ATCC 31267 / DSM 46492 / JCM 5070 / NBRC 14893 / NCIMB 12804 / NRRL 8165 / MA-4680).